Here is a 551-residue protein sequence, read N- to C-terminus: Glutamate--tRNA ligase (551 aa).

Positions 100–110 (PNPNGPPTLGS) match the 'HIGH' region motif.

Belongs to the class-I aminoacyl-tRNA synthetase family. Glutamate--tRNA ligase type 2 subfamily.

The protein resides in the cytoplasm. It catalyses the reaction tRNA(Glu) + L-glutamate + ATP = L-glutamyl-tRNA(Glu) + AMP + diphosphate. Its function is as follows. Catalyzes the attachment of glutamate to tRNA(Glu) in a two-step reaction: glutamate is first activated by ATP to form Glu-AMP and then transferred to the acceptor end of tRNA(Glu). This Archaeoglobus fulgidus (strain ATCC 49558 / DSM 4304 / JCM 9628 / NBRC 100126 / VC-16) protein is Glutamate--tRNA ligase.